A 352-amino-acid polypeptide reads, in one-letter code: tRNA pseudouridine synthase D (352 aa).

The Nucleophile role is filled by aspartate 81. Positions 157 to 303 constitute a TRUD domain; the sequence is GVPNYFGTQR…MDHERRILRL (147 aa).

It belongs to the pseudouridine synthase TruD family.

It carries out the reaction uridine(13) in tRNA = pseudouridine(13) in tRNA. Functionally, responsible for synthesis of pseudouridine from uracil-13 in transfer RNAs. The polypeptide is tRNA pseudouridine synthase D (Pseudomonas putida (strain GB-1)).